Reading from the N-terminus, the 533-residue chain is T-complex protein 1 subunit delta (533 aa).

Polar residues predominate over residues 1–15 (MAQSQVGKGSPSNAT). The segment at 1–25 (MAQSQVGKGSPSNATFRDKEKPQEV) is disordered. The span at 16 to 25 (FRDKEKPQEV) shows a compositional bias: basic and acidic residues.

Belongs to the TCP-1 chaperonin family. In terms of assembly, heterooligomeric complex of about 850 to 900 kDa that forms two stacked rings, 12 to 16 nm in diameter.

Its subcellular location is the cytoplasm. Functionally, molecular chaperone; assists the folding of proteins upon ATP hydrolysis. Known to play a role, in vitro, in the folding of actin and tubulin. This is T-complex protein 1 subunit delta (CCT4) from Debaryomyces hansenii (strain ATCC 36239 / CBS 767 / BCRC 21394 / JCM 1990 / NBRC 0083 / IGC 2968) (Yeast).